Reading from the N-terminus, the 239-residue chain is Pyridoxine 5'-phosphate synthase (239 aa).

A 3-amino-2-oxopropyl phosphate-binding site is contributed by Asn7. 9-10 serves as a coordination point for 1-deoxy-D-xylulose 5-phosphate; sequence DH. Arg18 contacts 3-amino-2-oxopropyl phosphate. Residue His43 is the Proton acceptor of the active site. Positions 45 and 50 each coordinate 1-deoxy-D-xylulose 5-phosphate. Residue Glu70 is the Proton acceptor of the active site. A 1-deoxy-D-xylulose 5-phosphate-binding site is contributed by Thr100. Catalysis depends on His191, which acts as the Proton donor. 3-amino-2-oxopropyl phosphate is bound by residues Gly192 and 213–214; that span reads GH.

The protein belongs to the PNP synthase family. Homooctamer; tetramer of dimers.

It is found in the cytoplasm. It carries out the reaction 3-amino-2-oxopropyl phosphate + 1-deoxy-D-xylulose 5-phosphate = pyridoxine 5'-phosphate + phosphate + 2 H2O + H(+). It participates in cofactor biosynthesis; pyridoxine 5'-phosphate biosynthesis; pyridoxine 5'-phosphate from D-erythrose 4-phosphate: step 5/5. Functionally, catalyzes the complicated ring closure reaction between the two acyclic compounds 1-deoxy-D-xylulose-5-phosphate (DXP) and 3-amino-2-oxopropyl phosphate (1-amino-acetone-3-phosphate or AAP) to form pyridoxine 5'-phosphate (PNP) and inorganic phosphate. This is Pyridoxine 5'-phosphate synthase from Geotalea uraniireducens (strain Rf4) (Geobacter uraniireducens).